The sequence spans 435 residues: Estrogen-related receptor gamma (435 aa).

The segment at 1-64 (MSNKDRHIDS…GLDSPPLYPS (64 aa)) is disordered. The span at 10 to 29 (SSCSSFIKTEPSSPASLTDS) shows a compositional bias: polar residues. A compositionally biased stretch (low complexity) spans 34–47 (SPGGSSDASGSYSS). The segment at residues 102 to 177 (KRLCLVCGDI…VGMLKEGVRL (76 aa)) is a DNA-binding region (nuclear receptor). 2 consecutive NR C4-type zinc fingers follow at residues 105–125 (CLVC…CEAC) and 141–160 (CPAT…CQAC). The NR LBD domain occupies 210 to 434 (PYNKIVSHLL…KLFSEMLEAK (225 aa)).

The protein belongs to the nuclear hormone receptor family. NR3 subfamily. As to quaternary structure, homodimer. Interacts with NRIP1, NCOA1 and NCOR2. Binds TLE1, PNRC1 and PNRC2. Binds GRIP1. In terms of processing, acetylated by PCAF/KAT2 (in vitro).

Its subcellular location is the nucleus. Functionally, orphan receptor that acts as a transcription activator in the absence of bound ligand. Binds specifically to an estrogen response element and activates reporter genes controlled by estrogen response elements. Induces the expression of PERM1 in the skeletal muscle. The chain is Estrogen-related receptor gamma (ESRRG) from Pongo abelii (Sumatran orangutan).